The sequence spans 258 residues: Probable phthiotriol/phenolphthiotriol dimycocerosates methyltransferase 2 (258 aa).

Belongs to the methyltransferase superfamily. Phthiotriol/phenolphthiotriol dimycocerosates methyltransferase family.

Its function is as follows. Catalyzes the methylation of the lipid moiety of the intermediate compounds phthiotriol and glycosylated phenolphthiotriol dimycoserosates to form phthiocerol dimycocerosates (DIM A) and glycosylated phenolphthiocerol dimycocerosates (PGL). This Mycobacterium ulcerans (strain Agy99) protein is Probable phthiotriol/phenolphthiotriol dimycocerosates methyltransferase 2.